A 209-amino-acid polypeptide reads, in one-letter code: Probable GTP-binding protein EngB (209 aa).

Positions 12–203 constitute an EngB-type G domain; it reads INLEIIFAGR…RDRLHEMKRD (192 aa). GTP-binding positions include 20–27, 45–49, 62–65, 142–145, and 179–181; these read GRSNVGKS, GVTLR, DMPG, NKMD, and ISA. Mg(2+)-binding residues include Ser27 and Thr47.

The protein belongs to the TRAFAC class TrmE-Era-EngA-EngB-Septin-like GTPase superfamily. EngB GTPase family. Mg(2+) is required as a cofactor.

Its function is as follows. Necessary for normal cell division and for the maintenance of normal septation. The polypeptide is Probable GTP-binding protein EngB (Methanosarcina mazei (strain ATCC BAA-159 / DSM 3647 / Goe1 / Go1 / JCM 11833 / OCM 88) (Methanosarcina frisia)).